The primary structure comprises 114 residues: Neurotrophic factor BDNF precursor form (114 aa).

Disulfide bonds link C14-C81, C59-C110, and C69-C112.

The protein belongs to the NGF-beta family.

It localises to the secreted. In terms of biological role, promotes the survival of neuronal populations that are all located either in the central nervous system or directly connected to it. This Xenopus laevis (African clawed frog) protein is Neurotrophic factor BDNF precursor form (bdnf).